Consider the following 241-residue polypeptide: Superantigen-like protein 13 (241 aa).

The N-terminal stretch at 1–26 (MNNNITKKIILSTTLLLLGTASTQFP) is a signal peptide.

This sequence belongs to the staphylococcal/streptococcal toxin family. As to quaternary structure, interacts with host FPR2; this interaction promotes neutrophil chemotaxis.

Functionally, acts as a pathogen alarming molecule by acting on host neutrophil chemotactic factors FPR2. Plays a role of chemoattractant and induces degranulation and oxidative burst in neutrophils. This Staphylococcus aureus (strain Newman) protein is Superantigen-like protein 13.